Consider the following 312-residue polypeptide: Acetyl-coenzyme A carboxylase carboxyl transferase subunit alpha (312 aa).

Residues 36 to 286 enclose the CoA carboxyltransferase C-terminal domain; sequence NLEKEISKTY…ADYVKKSLNE (251 aa).

It belongs to the AccA family. As to quaternary structure, acetyl-CoA carboxylase is a heterohexamer composed of biotin carboxyl carrier protein (AccB), biotin carboxylase (AccC) and two subunits each of ACCase subunit alpha (AccA) and ACCase subunit beta (AccD).

Its subcellular location is the cytoplasm. The enzyme catalyses N(6)-carboxybiotinyl-L-lysyl-[protein] + acetyl-CoA = N(6)-biotinyl-L-lysyl-[protein] + malonyl-CoA. It functions in the pathway lipid metabolism; malonyl-CoA biosynthesis; malonyl-CoA from acetyl-CoA: step 1/1. Its function is as follows. Component of the acetyl coenzyme A carboxylase (ACC) complex. First, biotin carboxylase catalyzes the carboxylation of biotin on its carrier protein (BCCP) and then the CO(2) group is transferred by the carboxyltransferase to acetyl-CoA to form malonyl-CoA. This Campylobacter jejuni subsp. jejuni serotype O:6 (strain 81116 / NCTC 11828) protein is Acetyl-coenzyme A carboxylase carboxyl transferase subunit alpha.